A 102-amino-acid chain; its full sequence is Protein Tat (102 aa).

Residues 1 to 24 (MEPVDPRLEPWKHPGSQPKTACNN) form an interaction with human CREBBP region. The segment at 1–48 (MEPVDPRLEPWKHPGSQPKTACNNCYCKKCCYHCQVCFLTKGLGISYG) is transactivation. Residues C22, C25, and C27 each contribute to the Zn(2+) site. The tract at residues 22–37 (CNNCYCKKCCYHCQVC) is cysteine-rich. K28 is subject to N6-acetyllysine; by host PCAF. Zn(2+) contacts are provided by C30, H33, C34, and C37. A core region spans residues 38 to 48 (FLTKGLGISYG). Residues 48-102 (GRKKRRQRRGPPQGSQTHQVSLSKQPTSQPRGDPTGPKESKEKVERETETDPAVQ) are disordered. The Nuclear localization signal, RNA-binding (TAR), and protein transduction signature appears at 49–57 (RKKRRQRRG). Residues 49-86 (RKKRRQRRGPPQGSQTHQVSLSKQPTSQPRGDPTGPKE) form an interaction with the host capping enzyme RNGTT region. Residues K50 and K51 each carry the N6-acetyllysine; by host EP300 and GCN5L2 modification. R52 and R53 each carry asymmetric dimethylarginine; by host PRMT6. Polar residues predominate over residues 62–77 (SQTHQVSLSKQPTSQP). K71 participates in a covalent cross-link: Glycyl lysine isopeptide (Lys-Gly) (interchain with G-Cter in ubiquitin). Residues 78 to 80 (RGD) carry the Cell attachment site motif. Residues 83–96 (GPKESKEKVERETE) show a composition bias toward basic and acidic residues.

This sequence belongs to the lentiviruses Tat family. In terms of assembly, interacts with host CCNT1. Associates with the P-TEFb complex composed at least of Tat, P-TEFb (CDK9 and CCNT1), TAR RNA, RNA Pol II. Recruits the HATs CREBBP, TAF1/TFIID, EP300, PCAF and GCN5L2. Interacts with host KAT5/Tip60; this interaction targets the latter to degradation. Interacts with the host deacetylase SIRT1. Interacts with host capping enzyme RNGTT; this interaction stimulates RNGTT. Binds to host KDR, and to the host integrins ITGAV/ITGB3 and ITGA5/ITGB1. Interacts with host KPNB1/importin beta-1 without previous binding to KPNA1/importin alpha-1. Interacts with EIF2AK2. Interacts with host nucleosome assembly protein NAP1L1; this interaction may be required for the transport of Tat within the nucleus, since the two proteins interact at the nuclear rim. Interacts with host C1QBP/SF2P32; this interaction involves lysine-acetylated Tat. Interacts with the host chemokine receptors CCR2, CCR3 and CXCR4. Interacts with host DPP4/CD26; this interaction may trigger an anti-proliferative effect. Interacts with host LDLR. Interacts with the host extracellular matrix metalloproteinase MMP1. Interacts with host PRMT6; this interaction mediates Tat's methylation. Interacts with, and is ubiquitinated by MDM2/Hdm2. Interacts with host PSMC3 and HTATIP2. Interacts with STAB1; this interaction may overcome SATB1-mediated repression of IL2 and IL2RA (interleukin) in T cells by binding to the same domain than HDAC1. Interacts (when acetylated) with human CDK13, thereby increasing HIV-1 mRNA splicing and promoting the production of the doubly spliced HIV-1 protein Nef. Interacts with host TBP; this interaction modulates the activity of transcriptional pre-initiation complex. Interacts with host RELA. Interacts with host PLSCR1; this interaction negatively regulates Tat transactivation activity by altering its subcellular distribution. Asymmetrical arginine methylation by host PRMT6 seems to diminish the transactivation capacity of Tat and affects the interaction with host CCNT1. In terms of processing, acetylation by EP300, CREBBP, GCN5L2/GCN5 and PCAF regulates the transactivation activity of Tat. EP300-mediated acetylation of Lys-50 promotes dissociation of Tat from the TAR RNA through the competitive binding to PCAF's bromodomain. In addition, the non-acetylated Tat's N-terminus can also interact with PCAF. PCAF-mediated acetylation of Lys-28 enhances Tat's binding to CCNT1. Lys-50 is deacetylated by SIRT1. Post-translationally, polyubiquitination by host MDM2 does not target Tat to degradation, but activates its transactivation function and fosters interaction with CCNT1 and TAR RNA. Phosphorylated by EIF2AK2 on serine and threonine residues adjacent to the basic region important for TAR RNA binding and function. Phosphorylation of Tat by EIF2AK2 is dependent on the prior activation of EIF2AK2 by dsRNA.

It is found in the host nucleus. Its subcellular location is the host nucleolus. The protein localises to the host cytoplasm. It localises to the secreted. Transcriptional activator that increases RNA Pol II processivity, thereby increasing the level of full-length viral transcripts. Recognizes a hairpin structure at the 5'-LTR of the nascent viral mRNAs referred to as the transactivation responsive RNA element (TAR) and recruits the cyclin T1-CDK9 complex (P-TEFb complex) that will in turn hyperphosphorylate the RNA polymerase II to allow efficient elongation. The CDK9 component of P-TEFb and other Tat-activated kinases hyperphosphorylate the C-terminus of RNA Pol II that becomes stabilized and much more processive. Other factors such as HTATSF1/Tat-SF1, SUPT5H/SPT5, and HTATIP2 are also important for Tat's function. Besides its effect on RNA Pol II processivity, Tat induces chromatin remodeling of proviral genes by recruiting the histone acetyltransferases (HATs) CREBBP, EP300 and PCAF to the chromatin. This also contributes to the increase in proviral transcription rate, especially when the provirus integrates in transcriptionally silent region of the host genome. To ensure maximal activation of the LTR, Tat mediates nuclear translocation of NF-kappa-B by interacting with host RELA. Through its interaction with host TBP, Tat may also modulate transcription initiation. Tat can reactivate a latently infected cell by penetrating in it and transactivating its LTR promoter. In the cytoplasm, Tat is thought to act as a translational activator of HIV-1 mRNAs. Its function is as follows. Extracellular circulating Tat can be endocytosed by surrounding uninfected cells via the binding to several surface receptors such as CD26, CXCR4, heparan sulfate proteoglycans (HSPG) or LDLR. Neurons are rarely infected, but they internalize Tat via their LDLR. Through its interaction with nuclear HATs, Tat is potentially able to control the acetylation-dependent cellular gene expression. Modulates the expression of many cellular genes involved in cell survival, proliferation or in coding for cytokines or cytokine receptors. Tat plays a role in T-cell and neurons apoptosis. Tat induced neurotoxicity and apoptosis probably contribute to neuroAIDS. Circulating Tat also acts as a chemokine-like and/or growth factor-like molecule that binds to specific receptors on the surface of the cells, affecting many cellular pathways. In the vascular system, Tat binds to ITGAV/ITGB3 and ITGA5/ITGB1 integrins dimers at the surface of endothelial cells and competes with bFGF for heparin-binding sites, leading to an excess of soluble bFGF. In Human immunodeficiency virus type 1 group M subtype B (isolate RF/HAT3) (HIV-1), this protein is Protein Tat.